The following is a 77-amino-acid chain: RNA-binding protein Hfq (77 aa).

The 61-residue stretch at 10–70 (DIFLNSARKN…ITTVTPEKPI (61 aa)) folds into the Sm domain.

Belongs to the Hfq family. In terms of assembly, homohexamer.

Functionally, RNA chaperone that binds small regulatory RNA (sRNAs) and mRNAs to facilitate mRNA translational regulation in response to envelope stress, environmental stress and changes in metabolite concentrations. Also binds with high specificity to tRNAs. This Clostridium botulinum (strain Eklund 17B / Type B) protein is RNA-binding protein Hfq.